Consider the following 378-residue polypeptide: Protein-glutamate methylesterase/protein-glutamine glutaminase 2 (378 aa).

The Response regulatory domain maps to 4–121 (KVLVVDDSGF…SRNPEKVKQL (118 aa)). Asp-55 carries the 4-aspartylphosphate modification. Positions 141 to 188 (APAPAAAPTPAPIPAAAPSSFGSHSAPARPAPAPAPTRAPAASASSPA) are disordered. The span at 145 to 155 (AAAPTPAPIPA) shows a compositional bias: pro residues. Low complexity-rich tracts occupy residues 156–168 (AAPSSFGSHSAPA) and 178–188 (RAPAASASSPA). Residues 187-378 (PAPKRKNYKL…IGKHIVEACV (192 aa)) enclose the CheB-type methylesterase domain. Residues Ser-202, His-229, and Asp-322 contribute to the active site.

This sequence belongs to the CheB family. Phosphorylated by CheA. Phosphorylation of the N-terminal regulatory domain activates the methylesterase activity.

It localises to the cytoplasm. It catalyses the reaction [protein]-L-glutamate 5-O-methyl ester + H2O = L-glutamyl-[protein] + methanol + H(+). The enzyme catalyses L-glutaminyl-[protein] + H2O = L-glutamyl-[protein] + NH4(+). Involved in chemotaxis. Part of a chemotaxis signal transduction system that modulates chemotaxis in response to various stimuli. Catalyzes the demethylation of specific methylglutamate residues introduced into the chemoreceptors (methyl-accepting chemotaxis proteins or MCP) by CheR. Also mediates the irreversible deamidation of specific glutamine residues to glutamic acid. The chain is Protein-glutamate methylesterase/protein-glutamine glutaminase 2 from Pseudomonas fluorescens (strain Pf0-1).